A 278-amino-acid polypeptide reads, in one-letter code: Diaminopimelate epimerase (278 aa).

The substrate site is built by asparagine 11 and asparagine 75. The Proton donor role is filled by cysteine 84. Substrate-binding positions include 85–86 (GN), asparagine 160, asparagine 195, and 213–214 (ER). Cysteine 222 acts as the Proton acceptor in catalysis. 223-224 (GT) is a substrate binding site.

This sequence belongs to the diaminopimelate epimerase family. As to quaternary structure, homodimer.

It is found in the cytoplasm. The enzyme catalyses (2S,6S)-2,6-diaminopimelate = meso-2,6-diaminopimelate. Its pathway is amino-acid biosynthesis; L-lysine biosynthesis via DAP pathway; DL-2,6-diaminopimelate from LL-2,6-diaminopimelate: step 1/1. Catalyzes the stereoinversion of LL-2,6-diaminopimelate (L,L-DAP) to meso-diaminopimelate (meso-DAP), a precursor of L-lysine and an essential component of the bacterial peptidoglycan. This Corynebacterium aurimucosum (strain ATCC 700975 / DSM 44827 / CIP 107346 / CN-1) (Corynebacterium nigricans) protein is Diaminopimelate epimerase.